Consider the following 462-residue polypeptide: Squalene synthase ERG9 (462 aa).

Residues 406–426 (AVVLFGVVIAALVCISGLMLG) form a helical membrane-spanning segment.

Belongs to the phytoene/squalene synthase family. Requires Mg(2+) as cofactor.

The protein resides in the endoplasmic reticulum membrane. It localises to the microsome. It catalyses the reaction 2 (2E,6E)-farnesyl diphosphate + NADPH + H(+) = squalene + 2 diphosphate + NADP(+). The enzyme catalyses 2 (2E,6E)-farnesyl diphosphate + NADH + H(+) = squalene + 2 diphosphate + NAD(+). Its pathway is terpene metabolism; lanosterol biosynthesis; lanosterol from farnesyl diphosphate: step 1/3. It participates in steroid metabolism; ergosterol biosynthesis. Squalene synthase; part of the third module of ergosterol biosynthesis pathway that includes the late steps of the pathway. ERG9 produces squalene from 2 farnesyl pyrophosphate moieties. The third module or late pathway involves the ergosterol synthesis itself through consecutive reactions that mainly occur in the endoplasmic reticulum (ER) membrane. Firstly, the squalene synthase ERG9 catalyzes the condensation of 2 farnesyl pyrophosphate moieties to form squalene, which is the precursor of all steroids. Squalene synthase is crucial for balancing the incorporation of farnesyl diphosphate (FPP) into sterol and nonsterol isoprene synthesis. Secondly, squalene is converted into lanosterol by the consecutive action of the squalene epoxidase ERG1 and the lanosterol synthase ERG7. Then, the delta(24)-sterol C-methyltransferase ERG6 methylates lanosterol at C-24 to produce eburicol. Eburicol is the substrate of the sterol 14-alpha demethylase encoded by CYP51A, CYP51B and CYP51C, to yield 4,4,24-trimethyl ergosta-8,14,24(28)-trienol. CYP51B encodes the enzyme primarily responsible for sterol 14-alpha-demethylation, and plays an essential role in ascospore formation. CYP51A encodes an additional sterol 14-alpha-demethylase, induced on ergosterol depletion and responsible for the intrinsic variation in azole sensitivity. The third CYP51 isoform, CYP51C, does not encode a sterol 14-alpha-demethylase, but is required for full virulence on host wheat ears. The C-14 reductase ERG24 then reduces the C14=C15 double bond which leads to 4,4-dimethylfecosterol. A sequence of further demethylations at C-4, involving the C-4 demethylation complex containing the C-4 methylsterol oxidases ERG25, the sterol-4-alpha-carboxylate 3-dehydrogenase ERG26 and the 3-keto-steroid reductase ERG27, leads to the production of fecosterol via 4-methylfecosterol. ERG28 has a role as a scaffold to help anchor ERG25, ERG26 and ERG27 to the endoplasmic reticulum. The C-8 sterol isomerase ERG2 then catalyzes the reaction which results in unsaturation at C-7 in the B ring of sterols and thus converts fecosterol to episterol. The sterol-C5-desaturases ERG3A and ERG3BB then catalyze the introduction of a C-5 double bond in the B ring to produce 5-dehydroepisterol. The C-22 sterol desaturases ERG5A and ERG5B further convert 5-dehydroepisterol into ergosta-5,7,22,24(28)-tetraen-3beta-ol by forming the C-22(23) double bond in the sterol side chain. Finally, ergosta-5,7,22,24(28)-tetraen-3beta-ol is substrate of the C-24(28) sterol reductase ERG4 to produce ergosterol. This chain is Squalene synthase ERG9, found in Gibberella zeae (strain ATCC MYA-4620 / CBS 123657 / FGSC 9075 / NRRL 31084 / PH-1) (Wheat head blight fungus).